The primary structure comprises 236 residues: SERTA domain-containing protein 1 (236 aa).

The tract at residues 1-20 is disordered; sequence MLSKGLKRKREEEEEKEPLA. Residues 38–85 enclose the SERTA domain; it reads PAVASSSLFDLSVLKLHHSLQQSEPDLRHLVLVVNTLRRIQASMAPAA. A disordered region spans residues 189-211; the sequence is PASEGLKPGPEDGPGKEEAPELD. Residues 197–207 show a composition bias toward basic and acidic residues; it reads GPEDGPGKEEA.

Interacts with the PHD-bromodomain of TIF1, TRIM28/TIF1B and p300/CBP. Interacts with E2F1 and TFDP1; modulates transactivation activity of TFDP1/E2F complexes. Also interacts with CDK4. Post-translationally, polyubiquitinated, which promotes proteasomal degradation.

Acts at E2F-responsive promoters as coregulator to integrate signals provided by PHD- and/or bromodomain-containing transcription factors. Stimulates E2F1/TFDP1 transcriptional activity. Renders the activity of cyclin D1/CDK4 resistant to the inhibitory effects of CDKN2A/p16INK4A. In Homo sapiens (Human), this protein is SERTA domain-containing protein 1 (SERTAD1).